The chain runs to 101 residues: Small ribosomal subunit protein uS14A (101 aa).

The disordered stretch occupies residues 32-71 (RRPGTPEPERNRAVEELRRQPRDASATRVRNRDSVDGRPR). Composition is skewed to basic and acidic residues over residues 38-53 (EPERNRAVEELRRQPR) and 61-70 (RNRDSVDGRP).

It belongs to the universal ribosomal protein uS14 family. In terms of assembly, part of the 30S ribosomal subunit. Contacts proteins S3 and S10.

In terms of biological role, binds 16S rRNA, required for the assembly of 30S particles and may also be responsible for determining the conformation of the 16S rRNA at the A site. The chain is Small ribosomal subunit protein uS14A from Streptomyces griseus subsp. griseus (strain JCM 4626 / CBS 651.72 / NBRC 13350 / KCC S-0626 / ISP 5235).